The primary structure comprises 216 residues: Endo-1,4-beta-xylanase 2 (216 aa).

The signal sequence occupies residues 1-27 (MVSFSSLFVAACAAVTAFALPNELEKR). Residues 28-216 (AITSNEQGTN…SSGSASITVS (189 aa)) form the GH11 domain. The N-linked (GlcNAc...) asparagine glycan is linked to Asn-87. The active-site Nucleophile is the Glu-112. Catalysis depends on Glu-203, which acts as the Proton donor.

It belongs to the glycosyl hydrolase 11 (cellulase G) family.

Its subcellular location is the secreted. It carries out the reaction Endohydrolysis of (1-&gt;4)-beta-D-xylosidic linkages in xylans.. The protein operates within glycan degradation; xylan degradation. Endo-1,4-beta-xylanase involved in the hydrolysis of xylan, a major structural heterogeneous polysaccharide found in plant biomass representing the second most abundant polysaccharide in the biosphere, after cellulose. The sequence is that of Endo-1,4-beta-xylanase 2 (xyn2) from Rhizopus oryzae (Mucormycosis agent).